Here is a 506-residue protein sequence, read N- to C-terminus: Galactose/methyl galactoside import ATP-binding protein MglA (506 aa).

ABC transporter domains follow at residues 14 to 249 and 264 to 506; these read LEMS…VGRS and VILE…SLHL. 46 to 53 is an ATP binding site; the sequence is GENGAGKS.

This sequence belongs to the ABC transporter superfamily. Galactose/methyl galactoside importer (TC 3.A.1.2.3) family. In terms of assembly, the complex is composed of one ATP-binding protein (MglA), two transmembrane proteins (MglC) and a solute-binding protein (MglB).

It is found in the cell inner membrane. It carries out the reaction D-galactose(out) + ATP + H2O = D-galactose(in) + ADP + phosphate + H(+). It catalyses the reaction methyl beta-D-galactoside(out) + ATP + H2O = methyl beta-D-galactoside(in) + ADP + phosphate + H(+). In terms of biological role, part of the ABC transporter complex MglABC involved in galactose/methyl galactoside import. Responsible for energy coupling to the transport system. The protein is Galactose/methyl galactoside import ATP-binding protein MglA of Shigella flexneri serotype 5b (strain 8401).